A 344-amino-acid polypeptide reads, in one-letter code: N-acetyl-gamma-glutamyl-phosphate reductase (344 aa).

The active site involves C150.

Belongs to the NAGSA dehydrogenase family. Type 1 subfamily.

It is found in the cytoplasm. The catalysed reaction is N-acetyl-L-glutamate 5-semialdehyde + phosphate + NADP(+) = N-acetyl-L-glutamyl 5-phosphate + NADPH + H(+). The protein operates within amino-acid biosynthesis; L-arginine biosynthesis; N(2)-acetyl-L-ornithine from L-glutamate: step 3/4. Its function is as follows. Catalyzes the NADPH-dependent reduction of N-acetyl-5-glutamyl phosphate to yield N-acetyl-L-glutamate 5-semialdehyde. This chain is N-acetyl-gamma-glutamyl-phosphate reductase, found in Pseudomonas aeruginosa (strain ATCC 15692 / DSM 22644 / CIP 104116 / JCM 14847 / LMG 12228 / 1C / PRS 101 / PAO1).